A 444-amino-acid polypeptide reads, in one-letter code: tRNA modification GTPase MnmE (444 aa).

(6S)-5-formyl-5,6,7,8-tetrahydrofolate is bound by residues arginine 23, glutamate 82, and lysine 121. Positions 216–365 (GTSIVLAGLP…LKQALQKWLN (150 aa)) constitute a TrmE-type G domain. Asparagine 226 serves as a coordination point for K(+). GTP is bound by residues 226–231 (NAGKSS), 245–251 (TDIPGTT), and 270–273 (DSAG). Position 230 (serine 230) interacts with Mg(2+). Threonine 245, isoleucine 247, and threonine 250 together coordinate K(+). Threonine 251 contacts Mg(2+). Lysine 444 lines the (6S)-5-formyl-5,6,7,8-tetrahydrofolate pocket.

Belongs to the TRAFAC class TrmE-Era-EngA-EngB-Septin-like GTPase superfamily. TrmE GTPase family. In terms of assembly, homodimer. Heterotetramer of two MnmE and two MnmG subunits. K(+) serves as cofactor.

It is found in the cytoplasm. Functionally, exhibits a very high intrinsic GTPase hydrolysis rate. Involved in the addition of a carboxymethylaminomethyl (cmnm) group at the wobble position (U34) of certain tRNAs, forming tRNA-cmnm(5)s(2)U34. The sequence is that of tRNA modification GTPase MnmE from Chlamydia trachomatis serovar A (strain ATCC VR-571B / DSM 19440 / HAR-13).